The following is a 210-amino-acid chain: Thymidylate kinase (210 aa).

G11–S18 provides a ligand contact to ATP.

It belongs to the thymidylate kinase family.

The enzyme catalyses dTMP + ATP = dTDP + ADP. Its function is as follows. Phosphorylation of dTMP to form dTDP in both de novo and salvage pathways of dTTP synthesis. This Histophilus somni (strain 2336) (Haemophilus somnus) protein is Thymidylate kinase.